A 126-amino-acid chain; its full sequence is Anti-adapter protein IraD (126 aa).

The protein belongs to the GpW/Gp25 family. IraD subfamily. In terms of assembly, interacts with RssB.

Its subcellular location is the cytoplasm. Inhibits RpoS proteolysis by regulating RssB activity, thereby increasing the stability of the sigma stress factor RpoS during oxidative stress. Its effect on RpoS stability is due to its interaction with RssB, which probably blocks the interaction of RssB with RpoS, and the consequent delivery of the RssB-RpoS complex to the ClpXP protein degradation pathway. This chain is Anti-adapter protein IraD, found in Salmonella paratyphi A (strain ATCC 9150 / SARB42).